Reading from the N-terminus, the 64-residue chain is Large ribosomal subunit protein bL32 (64 aa).

Residues 1–20 (MALPKYKTSRANTHSRRANW) are disordered.

This sequence belongs to the bacterial ribosomal protein bL32 family.

In Bifidobacterium adolescentis (strain ATCC 15703 / DSM 20083 / NCTC 11814 / E194a), this protein is Large ribosomal subunit protein bL32.